The chain runs to 609 residues: Beta-(1--&gt;2)glucan export ATP-binding/permease protein NdvA (609 aa).

Positions 21–311 (GWILAGANLL…VVSFINSVFM (291 aa)) constitute an ABC transmembrane type-1 domain. The next 6 helical transmembrane spans lie at 22-42 (WILA…PVLF), 68-88 (LLAV…TVAL), 146-166 (EHFA…YINW), 167-187 (RLAI…TLVV), 248-268 (WWAV…LAIF), and 285-305 (IVMF…VVSF). An ABC transporter domain is found at 345 to 579 (VEFNDVSFSY…GGHFAQLAKA (235 aa)). 378–385 (GPTGAGKS) contacts ATP.

It belongs to the ABC transporter superfamily. Beta-(1--&gt;2)glucan exporter (TC 3.A.1.108.1) family. Homodimer.

The protein resides in the cell inner membrane. It carries out the reaction [(1-&gt;2)-beta-D-glucosyl](n)(in) + ATP + H2O = [(1-&gt;2)-beta-D-glucosyl](n)(out) + ADP + phosphate + H(+). Functionally, involved in beta-(1--&gt;2)glucan export. Transmembrane domains (TMD) form a pore in the inner membrane and the ATP-binding domain (NBD) is responsible for energy generation. The sequence is that of Beta-(1--&gt;2)glucan export ATP-binding/permease protein NdvA from Nitrobacter winogradskyi (strain ATCC 25391 / DSM 10237 / CIP 104748 / NCIMB 11846 / Nb-255).